The primary structure comprises 374 residues: N5-carboxyaminoimidazole ribonucleotide synthase (374 aa).

Residues arginine 108, lysine 148, 153–159, 183–186, glutamate 191, histidine 214, and 266–267 contribute to the ATP site; these read GYDGKGQ, EKYL, and NE. In terms of domain architecture, ATP-grasp spans 112-296; sequence KETLKSAGTK…QFDTHILAVT (185 aa).

This sequence belongs to the PurK/PurT family. Homodimer.

It carries out the reaction 5-amino-1-(5-phospho-beta-D-ribosyl)imidazole + hydrogencarbonate + ATP = 5-carboxyamino-1-(5-phospho-D-ribosyl)imidazole + ADP + phosphate + 2 H(+). The protein operates within purine metabolism; IMP biosynthesis via de novo pathway; 5-amino-1-(5-phospho-D-ribosyl)imidazole-4-carboxylate from 5-amino-1-(5-phospho-D-ribosyl)imidazole (N5-CAIR route): step 1/2. Functionally, catalyzes the ATP-dependent conversion of 5-aminoimidazole ribonucleotide (AIR) and HCO(3)(-) to N5-carboxyaminoimidazole ribonucleotide (N5-CAIR). This is N5-carboxyaminoimidazole ribonucleotide synthase from Staphylococcus aureus (strain MSSA476).